A 635-amino-acid chain; its full sequence is Threonine--tRNA ligase (635 aa).

The TGS domain maps to 1–62 (MITITLPDGS…EHDAILRIIT (62 aa)). The segment at 244 to 535 (DHRKIGKAQD…LIEHYAGIWP (292 aa)) is catalytic. The Zn(2+) site is built by cysteine 335, histidine 386, and histidine 512.

Belongs to the class-II aminoacyl-tRNA synthetase family. Homodimer. It depends on Zn(2+) as a cofactor.

Its subcellular location is the cytoplasm. The catalysed reaction is tRNA(Thr) + L-threonine + ATP = L-threonyl-tRNA(Thr) + AMP + diphosphate + H(+). Functionally, catalyzes the attachment of threonine to tRNA(Thr) in a two-step reaction: L-threonine is first activated by ATP to form Thr-AMP and then transferred to the acceptor end of tRNA(Thr). Also edits incorrectly charged L-seryl-tRNA(Thr). The polypeptide is Threonine--tRNA ligase (Xylella fastidiosa (strain M12)).